Reading from the N-terminus, the 250-residue chain is Triosephosphate isomerase (250 aa).

8-10 (NWK) provides a ligand contact to substrate. Histidine 96 serves as the catalytic Electrophile. Glutamate 169 acts as the Proton acceptor in catalysis. Residues glycine 175, serine 214, and 235-236 (GG) contribute to the substrate site.

Belongs to the triosephosphate isomerase family. As to quaternary structure, homodimer.

The protein resides in the cytoplasm. The enzyme catalyses D-glyceraldehyde 3-phosphate = dihydroxyacetone phosphate. Its pathway is carbohydrate biosynthesis; gluconeogenesis. It functions in the pathway carbohydrate degradation; glycolysis; D-glyceraldehyde 3-phosphate from glycerone phosphate: step 1/1. Its function is as follows. Involved in the gluconeogenesis. Catalyzes stereospecifically the conversion of dihydroxyacetone phosphate (DHAP) to D-glyceraldehyde-3-phosphate (G3P). The sequence is that of Triosephosphate isomerase from Oleidesulfovibrio alaskensis (strain ATCC BAA-1058 / DSM 17464 / G20) (Desulfovibrio alaskensis).